The chain runs to 321 residues: Malate dehydrogenase (321 aa).

Residues 11–16 (GSGNIG) and Asp-35 each bind NAD(+). The substrate site is built by Arg-84 and Arg-90. NAD(+) contacts are provided by residues Asn-97 and 120–122 (ITN). Positions 122 and 153 each coordinate substrate. His-177 functions as the Proton acceptor in the catalytic mechanism.

The protein belongs to the LDH/MDH superfamily. MDH type 3 family.

It catalyses the reaction (S)-malate + NAD(+) = oxaloacetate + NADH + H(+). Functionally, catalyzes the reversible oxidation of malate to oxaloacetate. The chain is Malate dehydrogenase from Rickettsia peacockii (strain Rustic).